A 296-amino-acid chain; its full sequence is Urease accessory protein UreD (296 aa).

This sequence belongs to the UreD family. In terms of assembly, ureD, UreF and UreG form a complex that acts as a GTP-hydrolysis-dependent molecular chaperone, activating the urease apoprotein by helping to assemble the nickel containing metallocenter of UreC. The UreE protein probably delivers the nickel.

It is found in the cytoplasm. Functionally, required for maturation of urease via the functional incorporation of the urease nickel metallocenter. This chain is Urease accessory protein UreD, found in Synechococcus sp. (strain CC9311).